The sequence spans 513 residues: Na(+)/H(+) antiporter NhaB (513 aa).

11 consecutive transmembrane segments (helical) span residues 21 to 41 (ITIVLFLIINPIIFFFISPFI), 88 to 108 (IIANFEVILLLIFMVAGIYFM), 119 to 139 (LLLSIRSKMVLSLAFCLSAAF), 143 to 163 (FLDALTVVAVIISVGMGFYGV), 208 to 228 (VGTALGGVMTMVGEPQNLIIA), 247 to 267 (LPVLICGLVTCFLVEKFGVFG), 303 to 323 (ALIGIWLVVGLAFHLAAVGII), 357 to 377 (LVVFFSVVAVIIDQHLFAPII), 389 to 409 (LALFYIFNGLLSAISDNVFVA), 447 to 467 (ATPNGQAAFLFLLTSSLAPLI), and 477 to 497 (MALPYTIVLSCIGLLAVEYIL).

This sequence belongs to the NhaB Na(+)/H(+) (TC 2.A.34) antiporter family.

It localises to the cell inner membrane. The catalysed reaction is 2 Na(+)(in) + 3 H(+)(out) = 2 Na(+)(out) + 3 H(+)(in). Its function is as follows. Na(+)/H(+) antiporter that extrudes sodium in exchange for external protons. The sequence is that of Na(+)/H(+) antiporter NhaB from Pasteurella multocida (strain Pm70).